We begin with the raw amino-acid sequence, 431 residues long: Histidinol dehydrogenase (431 aa).

Residues tyrosine 127, glutamine 190, and asparagine 213 each contribute to the NAD(+) site. Positions 238, 260, and 263 each coordinate substrate. Residues glutamine 260 and histidine 263 each coordinate Zn(2+). Residues glutamate 329 and histidine 330 each act as proton acceptor in the active site. 4 residues coordinate substrate: histidine 330, aspartate 363, glutamate 417, and histidine 422. Aspartate 363 serves as a coordination point for Zn(2+). Residue histidine 422 participates in Zn(2+) binding.

Belongs to the histidinol dehydrogenase family. The cofactor is Zn(2+).

It catalyses the reaction L-histidinol + 2 NAD(+) + H2O = L-histidine + 2 NADH + 3 H(+). Its pathway is amino-acid biosynthesis; L-histidine biosynthesis; L-histidine from 5-phospho-alpha-D-ribose 1-diphosphate: step 9/9. Its function is as follows. Catalyzes the sequential NAD-dependent oxidations of L-histidinol to L-histidinaldehyde and then to L-histidine. This chain is Histidinol dehydrogenase, found in Methanopyrus kandleri (strain AV19 / DSM 6324 / JCM 9639 / NBRC 100938).